The following is a 311-amino-acid chain: Probable manganese-dependent inorganic pyrophosphatase (311 aa).

6 residues coordinate Mn(2+): histidine 9, aspartate 13, aspartate 15, aspartate 77, histidine 99, and aspartate 151.

The protein belongs to the PPase class C family. As to quaternary structure, homodimer. Mn(2+) is required as a cofactor.

The protein localises to the cytoplasm. The catalysed reaction is diphosphate + H2O = 2 phosphate + H(+). The sequence is that of Probable manganese-dependent inorganic pyrophosphatase (ppaC) from Streptococcus gordonii (strain Challis / ATCC 35105 / BCRC 15272 / CH1 / DL1 / V288).